Reading from the N-terminus, the 175-residue chain is Peptide methionine sulfoxide reductase MsrA (175 aa).

Cysteine 10 is an active-site residue.

It belongs to the MsrA Met sulfoxide reductase family.

It carries out the reaction L-methionyl-[protein] + [thioredoxin]-disulfide + H2O = L-methionyl-(S)-S-oxide-[protein] + [thioredoxin]-dithiol. The enzyme catalyses [thioredoxin]-disulfide + L-methionine + H2O = L-methionine (S)-S-oxide + [thioredoxin]-dithiol. Functionally, has an important function as a repair enzyme for proteins that have been inactivated by oxidation. Catalyzes the reversible oxidation-reduction of methionine sulfoxide in proteins to methionine. The sequence is that of Peptide methionine sulfoxide reductase MsrA from Clavibacter sepedonicus (Clavibacter michiganensis subsp. sepedonicus).